The chain runs to 103 residues: Floral defensin-like protein 1 (103 aa).

The signal sequence occupies residues 1-25 (MARSICFFAVAILALMLFAAYDAEA). 5 cysteine pairs are disulfide-bonded: Cys28–Cys72, Cys32–Cys48, Cys39–Cys59, Cys45–Cys66, and Cys49–Cys68. A propeptide spans 73–103 (VFEKTEATQTETFTKDVNTLAEALLEADMMV) (removed in mature form).

It belongs to the DEFL family. In terms of processing, when compared to other plant defensins, the petunia defensins have an additional fifth disulfide bond. Petals.

Its subcellular location is the secreted. It localises to the vacuole. Plant defense peptide with antifungal activity against F.oxysporum and B.cinerea. The protein is Floral defensin-like protein 1 (D1) of Petunia hybrida (Petunia).